A 347-amino-acid polypeptide reads, in one-letter code: Photosystem II assembly protein Ycf48 (347 aa).

The first 38 residues, 1 to 38 (MFAKQIDIHWQKMKGIKFLHWLLGTVLLWVSLSTPALA), serve as a signal peptide directing secretion. Residues 202 to 226 (RGSFYSTWEPGQTAWEPHNRTTSRR) carry the Arg-rich patch motif.

Belongs to the Ycf48 family. In terms of assembly, interacts with the D1 protein (crystallized with PsbA1 or PsbA3), via the latter's C-terminal prepropeptide, may interact with parts of the mature D1 protein as well.

Its subcellular location is the cellular thylakoid lumen. Its function is as follows. A factor required for optimal assembly of photosystem II (PSII), acting in the early stages of PSII assembly. Also plays a role in replacement of photodamaged D1 (psbA). Assists YidC in synthesis of chlorophyll-binding proteins. The sequence is that of Photosystem II assembly protein Ycf48 from Thermosynechococcus vestitus (strain NIES-2133 / IAM M-273 / BP-1).